The sequence spans 191 residues: Lipopolysaccharide export system protein LptC (191 aa).

Residues 7–25 form a helical membrane-spanning segment; sequence WVIIVLSLAVLVMIGINMA.

The protein belongs to the LptC family. In terms of assembly, component of the lipopolysaccharide transport and assembly complex. Interacts with LptA and the LptBFG transporter complex.

Its subcellular location is the cell inner membrane. In terms of biological role, involved in the assembly of lipopolysaccharide (LPS). Required for the translocation of LPS from the inner membrane to the outer membrane. Facilitates the transfer of LPS from the inner membrane to the periplasmic protein LptA. Could be a docking site for LptA. This is Lipopolysaccharide export system protein LptC from Escherichia coli O157:H7.